Here is a 247-residue protein sequence, read N- to C-terminus: Adenosylcobinamide-GDP ribazoletransferase (247 aa).

5 helical membrane-spanning segments follow: residues 34–54 (IITFPLIGLLLGAISGLVFMV), 57–77 (AWCGAPLAALFSVLVLALMTG), 113–133 (GGLALIFVVLAKILVLSELAL), 138–158 (ILASLAAACAVSRGTAALLMY), and 194–214 (VLLLGMHGVAAMVVTMVAIFI).

It belongs to the CobS family. The cofactor is Mg(2+).

Its subcellular location is the cell inner membrane. It catalyses the reaction alpha-ribazole + adenosylcob(III)inamide-GDP = adenosylcob(III)alamin + GMP + H(+). The enzyme catalyses alpha-ribazole 5'-phosphate + adenosylcob(III)inamide-GDP = adenosylcob(III)alamin 5'-phosphate + GMP + H(+). It participates in cofactor biosynthesis; adenosylcobalamin biosynthesis; adenosylcobalamin from cob(II)yrinate a,c-diamide: step 7/7. In terms of biological role, joins adenosylcobinamide-GDP and alpha-ribazole to generate adenosylcobalamin (Ado-cobalamin). Also synthesizes adenosylcobalamin 5'-phosphate from adenosylcobinamide-GDP and alpha-ribazole 5'-phosphate. In Shigella flexneri, this protein is Adenosylcobinamide-GDP ribazoletransferase.